The sequence spans 293 residues: Ribonuclease HIII (293 aa).

Positions 78 to 293 constitute an RNase H type-2 domain; that stretch reads LPLIGTDEVG…TEKAKKRLER (216 aa). Positions 84, 85, and 187 each coordinate a divalent metal cation.

The protein belongs to the RNase HII family. RnhC subfamily. It depends on Mn(2+) as a cofactor. Mg(2+) serves as cofactor.

It is found in the cytoplasm. It carries out the reaction Endonucleolytic cleavage to 5'-phosphomonoester.. Its function is as follows. Endonuclease that specifically degrades the RNA of RNA-DNA hybrids. The polypeptide is Ribonuclease HIII (rnhC) (Streptococcus pneumoniae serotype 4 (strain ATCC BAA-334 / TIGR4)).